A 1085-amino-acid polypeptide reads, in one-letter code: Phosphorylase b kinase regulatory subunit beta (1085 aa).

Phosphoserine is present on residues serine 10, serine 19, and serine 693. Calmodulin-binding stretches follow at residues 760-787 (RVYR…VVDS) and 912-943 (SGRC…ILER). Cysteine 1082 is lipidated: S-farnesyl cysteine.

This sequence belongs to the phosphorylase b kinase regulatory chain family. Hexadecamer of 4 heterotetramers, each composed of alpha, beta, gamma, and delta subunits. Alpha (PHKA1 or PHKA2) and beta (PHKB) are regulatory subunits, gamma (PHKG1 or PHKG2) is the catalytic subunit, and delta is calmodulin. Although the final Cys may be farnesylated, the terminal tripeptide is probably not removed, and the C-terminus is not methylated.

Its subcellular location is the cell membrane. It functions in the pathway glycan biosynthesis; glycogen metabolism. By phosphorylation of various serine residues. Phosphorylase b kinase catalyzes the phosphorylation of serine in certain substrates, including troponin I. The beta chain acts as a regulatory unit and modulates the activity of the holoenzyme in response to phosphorylation. This Mus musculus (Mouse) protein is Phosphorylase b kinase regulatory subunit beta (Phkb).